Here is a 503-residue protein sequence, read N- to C-terminus: ATP synthase subunit alpha (503 aa).

Residue Gly169 to Thr176 coordinates ATP.

It belongs to the ATPase alpha/beta chains family. F-type ATPases have 2 components, CF(1) - the catalytic core - and CF(0) - the membrane proton channel. CF(1) has five subunits: alpha(3), beta(3), gamma(1), delta(1), epsilon(1). CF(0) has three main subunits: a(1), b(2) and c(9-12). The alpha and beta chains form an alternating ring which encloses part of the gamma chain. CF(1) is attached to CF(0) by a central stalk formed by the gamma and epsilon chains, while a peripheral stalk is formed by the delta and b chains.

It localises to the cell membrane. It carries out the reaction ATP + H2O + 4 H(+)(in) = ADP + phosphate + 5 H(+)(out). Produces ATP from ADP in the presence of a proton gradient across the membrane. The alpha chain is a regulatory subunit. The sequence is that of ATP synthase subunit alpha from Lactobacillus johnsonii (strain CNCM I-12250 / La1 / NCC 533).